The following is a 345-amino-acid chain: S-adenosylmethionine:tRNA ribosyltransferase-isomerase (345 aa).

Belongs to the QueA family. In terms of assembly, monomer.

Its subcellular location is the cytoplasm. It catalyses the reaction 7-aminomethyl-7-carbaguanosine(34) in tRNA + S-adenosyl-L-methionine = epoxyqueuosine(34) in tRNA + adenine + L-methionine + 2 H(+). Its pathway is tRNA modification; tRNA-queuosine biosynthesis. Functionally, transfers and isomerizes the ribose moiety from AdoMet to the 7-aminomethyl group of 7-deazaguanine (preQ1-tRNA) to give epoxyqueuosine (oQ-tRNA). The polypeptide is S-adenosylmethionine:tRNA ribosyltransferase-isomerase (Shewanella woodyi (strain ATCC 51908 / MS32)).